A 311-amino-acid chain; its full sequence is Heparan sulfate glucosamine 3-O-sulfotransferase 1 (311 aa).

A signal peptide spans 1–20; the sequence is MTLLLLGAVLLVAQPQLVHS. The N-linked (GlcNAc...) asparagine glycan is linked to Asn-52. Residues 68–72, Arg-151, and Ser-159 contribute to the 3'-phosphoadenylyl sulfate site; that span reads KGGTR. N-linked (GlcNAc...) asparagine glycosylation is found at Asn-196, Asn-246, and Asn-253. Tyr-259 contributes to the 3'-phosphoadenylyl sulfate binding site. A disulfide bond links Cys-260 and Cys-269. Residue 274-278 participates in 3'-phosphoadenylyl sulfate binding; it reads KGRAH.

Belongs to the sulfotransferase 1 family.

Its subcellular location is the golgi apparatus lumen. The catalysed reaction is alpha-D-glucosaminyl-[heparan sulfate](n) + 3'-phosphoadenylyl sulfate = 3-sulfo-alpha-D-glucosaminyl-[heparan sulfate](n) + adenosine 3',5'-bisphosphate + H(+). Sulfotransferase that utilizes 3'-phospho-5'-adenylyl sulfate (PAPS) to catalyze the transfer of a sulfo group to position 3 of glucosamine residues in heparan. Catalyzes the rate limiting step in the biosynthesis of heparan sulfate (HSact). This modification is a crucial step in the biosynthesis of anticoagulant heparan sulfate as it completes the structure of the antithrombin pentasaccharide binding site. This chain is Heparan sulfate glucosamine 3-O-sulfotransferase 1 (Hs3st1), found in Mus musculus (Mouse).